The primary structure comprises 501 residues: GMP synthase [glutamine-hydrolyzing] (501 aa).

The Glutamine amidotransferase type-1 domain occupies 1 to 185; it reads MVLVVDYGSQ…LFNVCKLEKN (185 aa). The active-site Nucleophile is the C75. Residues H159 and E161 contribute to the active site. Positions 186-376 constitute a GMPS ATP-PPase domain; the sequence is WKIGDLVEEK…LGIPDRIINR (191 aa). 213–219 is a binding site for ATP; the sequence is SGGVDSS.

In terms of assembly, homodimer.

The enzyme catalyses XMP + L-glutamine + ATP + H2O = GMP + L-glutamate + AMP + diphosphate + 2 H(+). Its pathway is purine metabolism; GMP biosynthesis; GMP from XMP (L-Gln route): step 1/1. Its function is as follows. Catalyzes the synthesis of GMP from XMP. The sequence is that of GMP synthase [glutamine-hydrolyzing] (guaA) from Thermotoga maritima (strain ATCC 43589 / DSM 3109 / JCM 10099 / NBRC 100826 / MSB8).